The following is a 423-amino-acid chain: Gamma-glutamyl phosphate reductase (423 aa).

Belongs to the gamma-glutamyl phosphate reductase family.

It localises to the cytoplasm. The catalysed reaction is L-glutamate 5-semialdehyde + phosphate + NADP(+) = L-glutamyl 5-phosphate + NADPH + H(+). Its pathway is amino-acid biosynthesis; L-proline biosynthesis; L-glutamate 5-semialdehyde from L-glutamate: step 2/2. In terms of biological role, catalyzes the NADPH-dependent reduction of L-glutamate 5-phosphate into L-glutamate 5-semialdehyde and phosphate. The product spontaneously undergoes cyclization to form 1-pyrroline-5-carboxylate. This Burkholderia thailandensis (strain ATCC 700388 / DSM 13276 / CCUG 48851 / CIP 106301 / E264) protein is Gamma-glutamyl phosphate reductase.